The sequence spans 650 residues: Chaperone protein HtpG (650 aa).

Positions 1 to 349 are a; substrate-binding; that stretch reads MSKTVKKFET…SSDLPLNVSR (349 aa). A b region spans residues 350 to 566; that stretch reads EILQEDVQIK…EHGLNANMER (217 aa). The c stretch occupies residues 567–650; it reads ILRAMNQTVP…VADGKAAAGE (84 aa).

The protein belongs to the heat shock protein 90 family. In terms of assembly, homodimer.

The protein localises to the cytoplasm. Functionally, molecular chaperone. Has ATPase activity. This Geobacter sulfurreducens (strain ATCC 51573 / DSM 12127 / PCA) protein is Chaperone protein HtpG.